The chain runs to 306 residues: Agmatinase (306 aa).

Residues His-126, Asp-149, His-151, Asp-153, Asp-230, and Asp-232 each coordinate Mn(2+).

This sequence belongs to the arginase family. Agmatinase subfamily. Requires Mn(2+) as cofactor.

The enzyme catalyses agmatine + H2O = urea + putrescine. Its pathway is amine and polyamine biosynthesis; putrescine biosynthesis via agmatine pathway; putrescine from agmatine: step 1/1. Functionally, catalyzes the formation of putrescine from agmatine. The protein is Agmatinase of Citrobacter koseri (strain ATCC BAA-895 / CDC 4225-83 / SGSC4696).